We begin with the raw amino-acid sequence, 395 residues long: F-box/kelch-repeat protein At3g13680 (395 aa).

Residues 1-47 (MTTMGDLPGDLVEEILSRVPLTSLRAIRSTCQKWNSLSKSQICGRKA) form the F-box domain. 4 Kelch repeats span residues 154 to 202 (ILRI…SLKG), 210 to 256 (KKET…VSLA), 265 to 314 (VLYQ…FIDE), and 337 to 383 (IVYI…LVQL).

This chain is F-box/kelch-repeat protein At3g13680, found in Arabidopsis thaliana (Mouse-ear cress).